The primary structure comprises 171 residues: Ribosome maturation factor RimM (171 aa).

One can recognise a PRC barrel domain in the interval 96–170 (AEGEYYYHEI…LVTIHVTEGL (75 aa)).

The protein belongs to the RimM family. Binds ribosomal protein uS19.

It is found in the cytoplasm. An accessory protein needed during the final step in the assembly of 30S ribosomal subunit, possibly for assembly of the head region. Essential for efficient processing of 16S rRNA. May be needed both before and after RbfA during the maturation of 16S rRNA. It has affinity for free ribosomal 30S subunits but not for 70S ribosomes. The protein is Ribosome maturation factor RimM of Bacillus anthracis (strain A0248).